The following is a 138-amino-acid chain: MSTTGKGGKAKGKTASSKQVSRSARAGLQFPVGRISRFLKHGRYSERVGTGAPVYLAAVLEYLAAEVLELAGNAAKDNKKTRIVPRHILLAIRNDEELNKLMANTTIADGGVLPNINPMLLPSKSKKTESRGQASQDL.

Residues 1–23 (MSTTGKGGKAKGKTASSKQVSRS) are disordered. Serine 2 bears the N-acetylserine mark. Residues lysine 6, lysine 9, lysine 11, lysine 13, and lysine 18 each carry the N6-acetyllysine modification. At serine 123 the chain carries Phosphoserine. Lysine 124 is covalently cross-linked (Glycyl lysine isopeptide (Lys-Gly) (interchain with G-Cter in ubiquitin)). Serine 125, serine 130, and serine 135 each carry phosphoserine. Residues 135–136 (SQ) carry the [ST]-Q motif motif.

This sequence belongs to the histone H2A family. The nucleosome is a histone octamer containing two molecules each of H2A, H2B, H3 and H4 assembled in one H3-H4 heterotetramer and two H2A-H2B heterodimers. The octamer wraps approximately 147 bp of DNA. In terms of processing, monoubiquitination of Lys-124 gives a specific tag for epigenetic transcriptional repression. Post-translationally, phosphorylated to form H2AX134ph (gamma-H2AX) in response to DNA double-strand breaks (DSBs) generated by exogenous genotoxic agents in both the mitotic MIC and the amitotic MAC. Gamma-H2AX is also found when programmed DNA rearrangements occur, namely homologous recombination in the MIC during prophase of meiosis, and chromosome fragmentation and DNA elimination in developing MACs. Gamma-H2AX is important to recover from exogenous DNA damage and to repair breaks associated with normal micronuclear meiosis and mitosis and macronuclear amitotic division. Acetylation occurs almost exclusively in the MAC.

The protein resides in the nucleus. The protein localises to the chromosome. In terms of biological role, core component of nucleosome which plays a central role in DNA double strand break (DSB) repair. Nucleosomes wrap and compact DNA into chromatin, limiting DNA accessibility to the cellular machineries which require DNA as a template. Histones thereby play a central role in transcription regulation, DNA repair, DNA replication and chromosomal stability. DNA accessibility is regulated via a complex set of post-translational modifications of histones, also called histone code, and nucleosome remodeling. This chain is Histone H2AX (HTA1), found in Tetrahymena thermophila (strain SB210).